Consider the following 74-residue polypeptide: Protein SlyX homolog (74 aa).

It belongs to the SlyX family.

The chain is Protein SlyX homolog from Neisseria meningitidis serogroup C / serotype 2a (strain ATCC 700532 / DSM 15464 / FAM18).